A 347-amino-acid chain; its full sequence is Adenine deaminase (347 aa).

Positions 16, 18, and 204 each coordinate Zn(2+). Glu-207 serves as the catalytic Proton donor. Residue Asp-285 participates in Zn(2+) binding. Asp-286 is a binding site for substrate.

Belongs to the metallo-dependent hydrolases superfamily. Adenosine and AMP deaminases family. Adenine deaminase type 2 subfamily. Requires Zn(2+) as cofactor. Probably ubiquitinated when cells enter quiescence in response to nutrient limitation, since it is specifically degraded via a process requiring the F-box protein SAF1 and components of the SKP1-Cullin-F-box complex.

It localises to the cytoplasm. Its subcellular location is the nucleus. It catalyses the reaction adenine + H2O + H(+) = hypoxanthine + NH4(+). Its function is as follows. Catalyzes the hydrolytic deamination of adenine to hypoxanthine. Plays an important role in the purine salvage pathway and in nitrogen catabolism. Also exhibits a low activity towards N(6)-substituted adenines that are commonly known as the plant hormones cytokinins. The chain is Adenine deaminase from Saccharomyces cerevisiae (strain ATCC 204508 / S288c) (Baker's yeast).